A 227-amino-acid chain; its full sequence is MKLWAILAVCILLLSSVSSIPLPSNWLAGKKRSHLPDPQEGEDQVFGMDGAVPEDPTANMAPQDQQTYTEIPDDYPDQFDDVLEFIQDTIKRLKRSSNKQPPSRRDRGRQSLAANTQISSKKTVKDRKRKNKGCVLREIHLNVTDLGLGYETKEELKFRYCSGSCNNPETTYDQILKNLTIRKKLVNDKVKQACCRPIAFDDDLSFLDDNLVYHTLKQHSAKKCGCI.

Residues 1–19 form the signal peptide; the sequence is MKLWAILAVCILLLSSVSS. Positions 20–93 are excised as a propeptide; sequence IPLPSNWLAG…EFIQDTIKRL (74 aa). Disordered stretches follow at residues 32 to 61 and 93 to 113; these read RSHLPDPQEGEDQVFGMDGAVPEDPTANMA and LKRSSNKQPPSRRDRGRQSLA. 3 disulfide bridges follow: Cys134–Cys195, Cys161–Cys224, and Cys165–Cys226. N-linked (GlcNAc...) asparagine glycosylation is found at Asn142 and Asn178.

Belongs to the TGF-beta family. GDNF subfamily. Homodimer; disulfide-linked. Interacts with GFRA1 coreceptor and RET: forms a 2:2:2 ternary complex composed of GDNF ligand, GFRA1 and RET receptor. In terms of tissue distribution, from stage 22, expressed in somites and the pronephros. At stage 24 and 26, expressed in the pharyngeal arches I-III. At stage 31, expression in the eye, central nervous system and pharyngeal arches IV and V increases. Up to stage 34, expression becomes intense at the oral cavity and lateral line structures. At this stage, expression weakens in the pharyngeal arches, and increases in the epibranchial arches. Expressed in the digestive tract in stage 34 embryos.

The protein localises to the secreted. Functionally, neurotrophic factor that enhances survival and morphological differentiation of dopaminergic neurons and increases their high-affinity dopamine uptake. Acts by binding to its coreceptor, GFRA1, leading to autophosphorylation and activation of the RET receptor. The polypeptide is Glial cell line-derived neurotrophic factor (Xenopus laevis (African clawed frog)).